A 379-amino-acid polypeptide reads, in one-letter code: Carbamoyl phosphate synthase small chain (379 aa).

A CPSase region spans residues Met-1–Glu-189. The L-glutamine site is built by Ser-47, Gly-241, and Gly-243. Residues His-193 to Ala-379 form the Glutamine amidotransferase type-1 domain. Cys-269 serves as the catalytic Nucleophile. L-glutamine-binding residues include Leu-270, Gln-273, Asn-311, Gly-313, and Phe-314. Active-site residues include His-353 and Glu-355.

This sequence belongs to the CarA family. As to quaternary structure, composed of two chains; the small (or glutamine) chain promotes the hydrolysis of glutamine to ammonia, which is used by the large (or ammonia) chain to synthesize carbamoyl phosphate. Tetramer of heterodimers (alpha,beta)4.

The enzyme catalyses hydrogencarbonate + L-glutamine + 2 ATP + H2O = carbamoyl phosphate + L-glutamate + 2 ADP + phosphate + 2 H(+). It catalyses the reaction L-glutamine + H2O = L-glutamate + NH4(+). The protein operates within amino-acid biosynthesis; L-arginine biosynthesis; carbamoyl phosphate from bicarbonate: step 1/1. Its pathway is pyrimidine metabolism; UMP biosynthesis via de novo pathway; (S)-dihydroorotate from bicarbonate: step 1/3. Its function is as follows. Small subunit of the glutamine-dependent carbamoyl phosphate synthetase (CPSase). CPSase catalyzes the formation of carbamoyl phosphate from the ammonia moiety of glutamine, carbonate, and phosphate donated by ATP, constituting the first step of 2 biosynthetic pathways, one leading to arginine and/or urea and the other to pyrimidine nucleotides. The small subunit (glutamine amidotransferase) binds and cleaves glutamine to supply the large subunit with the substrate ammonia. This is Carbamoyl phosphate synthase small chain from Vibrio parahaemolyticus serotype O3:K6 (strain RIMD 2210633).